Reading from the N-terminus, the 620-residue chain is 1-deoxy-D-xylulose-5-phosphate synthase (620 aa).

Thiamine diphosphate contacts are provided by residues His-80 and Gly-121 to Ser-123. Asp-152 is a Mg(2+) binding site. Residues Gly-153 to Ala-154, Asn-181, Tyr-288, and Glu-370 contribute to the thiamine diphosphate site. Position 181 (Asn-181) interacts with Mg(2+).

This sequence belongs to the transketolase family. DXPS subfamily. Homodimer. It depends on Mg(2+) as a cofactor. Requires thiamine diphosphate as cofactor.

The catalysed reaction is D-glyceraldehyde 3-phosphate + pyruvate + H(+) = 1-deoxy-D-xylulose 5-phosphate + CO2. The protein operates within metabolic intermediate biosynthesis; 1-deoxy-D-xylulose 5-phosphate biosynthesis; 1-deoxy-D-xylulose 5-phosphate from D-glyceraldehyde 3-phosphate and pyruvate: step 1/1. Functionally, catalyzes the acyloin condensation reaction between C atoms 2 and 3 of pyruvate and glyceraldehyde 3-phosphate to yield 1-deoxy-D-xylulose-5-phosphate (DXP). In Shigella sonnei (strain Ss046), this protein is 1-deoxy-D-xylulose-5-phosphate synthase.